Consider the following 1165-residue polypeptide: Adhesion G-protein coupled receptor G6 (1165 aa).

The signal sequence occupies residues 1–30; sequence MMFDTLGKRCCPWRLKPSALLFLFVLCVTC. At 31 to 832 the chain is on the extracellular side; the sequence is VPLSVCGCGS…ASQIDGRNTK (802 aa). Cysteines 41 and 67 form a disulfide. The CUB domain maps to 41–149; it reads CRLVLSNPSG…KGFNASYIRV (109 aa). Ca(2+) contacts are provided by E89 and D97. Residues C94 and C111 are joined by a disulfide bond. N-linked (GlcNAc...) asparagine glycosylation is present at N121. Residues D134, S136, and I137 each coordinate Ca(2+). A glycan (N-linked (GlcNAc...) asparagine) is linked at N143. One can recognise a Pentraxin (PTX) domain in the interval 154-356; the sequence is RNQKVILPQT…ALKAEGNLSC (203 aa). Disulfide bonds link C186–C254 and C231–C277. Residues N258, N314, N324, N353, N370, N410, N417, N424, N458, N462, and N478 are each glycosylated (N-linked (GlcNAc...) asparagine). Residues 446 to 807 are mediates interaction with laminin-2; the sequence is DKRLVLWALL…LDAGETICLC (362 aa). 2 disulfide bridges follow: C498-C533 and C521-C550. N-linked (GlcNAc...) asparagine glycans are attached at residues N536, N549, N563, N570, N665, N674, N720, N746, N781, and N788. Residues 640–823 form the GAIN-B domain; it reads PHVNIETQNL…GVLMDLPRSA (184 aa). 2 disulfide bridges follow: C773/C805 and C792/C807. Residues 773–823 form a GPS region; it reads CAFWDMNKNKSFGGWNTSGCVAHSDLDAGETICLCSHFTHFGVLMDLPRSA. The interval 812–820 is stachel; it reads HFGVLMDLP. A helical transmembrane segment spans residues 833-853; sequence VLTFITYIGCGISAIFSAATL. Topologically, residues 854-873 are cytoplasmic; sequence LTYVAFEKLRRDYPSKILMN. A helical transmembrane segment spans residues 874–894; the sequence is LSSALLFLNLIFLLDGWVTSF. Residues 895–899 lie on the Extracellular side of the membrane; that stretch reads GVAGL. The chain crosses the membrane as a helical span at residues 900-920; sequence CTAVAALLHFFLLATFTWMGL. Residues 921-940 are Cytoplasmic-facing; sequence EAIHMYIALVKVFNTYIHRY. The helical transmembrane segment at 941–961 threads the bilayer; sequence ILKFCIIGWGLPALVVSIILV. At 962–994 the chain is on the extracellular side; the sequence is SRRQNEVYGKESYGKDQDDEFCWIQDPVVFYVS. A helical membrane pass occupies residues 995-1015; the sequence is CAGYFGVMFFLNVAMFIVVMV. The Cytoplasmic portion of the chain corresponds to 1016 to 1039; sequence QICGRNGKRSNRTLREEVLRNLRS. The helical transmembrane segment at 1040 to 1060 threads the bilayer; the sequence is VVSLTFLLGMTWGFAFFAWGP. The Extracellular portion of the chain corresponds to 1061-1062; it reads LN. A helical membrane pass occupies residues 1063 to 1083; it reads IPFMYLFSIFNSLQGLFIFIF. N1073 provides a ligand contact to 17alpha-hydroxyprogesterone. Over 1084–1165 the chain is Cytoplasmic; the sequence is HCAMKENVQK…KRNSHSDNFS (82 aa). Residues 1126-1154 are compositionally biased toward low complexity; the sequence is NLGKSLSSSSIGSNSTYLTSKSKSSSTTY. Residues 1126–1165 form a disordered region; it reads NLGKSLSSSSIGSNSTYLTSKSKSSSTTYFKRNSHSDNFS. A phosphoserine mark is found at S1135 and S1138.

It belongs to the G-protein coupled receptor 2 family. Adhesion G-protein coupled receptor (ADGR) subfamily. As to quaternary structure, heterodimer of 2 chains generated by proteolytic processing; the large extracellular N-terminal fragment and the membrane-bound C-terminal fragment predominantly remain associated and non-covalently linked. Interacts with Laminin-2; this interaction stabilizes the receptor in an inactive state. Laminin-2 polymerization could facilitate ADGRG6-NTF removal, thereby exposing the tethered agonist to drive myelination. Interacts with PRNP. Interacts with ITGB1. Interacts with LRP1. Post-translationally, proteolytically cleaved into 2 conserved sites: one in the GPS region of the GAIN-B domain (S1 site) and the other in the middle of the extracellular domain (S2 site). The proteolytic cleavage at S1 site generates an extracellular subunit and a seven-transmembrane subunit. Furin is involved in the cleavage of the S2 site generating a soluble fragment. Processing at the GPS region occurred independent of and probably prior to the cleavage at the S2 site. Proteolytic cleavage is required for activation of the receptor. Expressed at high levels in the heart, somite and otic vesicle during embryogenesis and in adult lung.

The protein localises to the cell membrane. Its activity is regulated as follows. Forms a heterodimer of 2 chains generated by proteolytic processing that remain associated through non-covalent interactions mediated by the GAIN-B domain. In the inactivated receptor, the Stachel sequence (also named stalk) is embedded in the GAIN-B domain, where it adopts a beta-strand conformation. On activation, the Stachel moves into the 7 transmembrane region and adopts a twisted hook-shaped configuration that forms contacts within the receptor, leading to coupling of a G-alpha protein, which activates signaling. The cleaved GAIN-B and N-terminal domains can then dissociate from the rest of the receptor. Its function is as follows. Adhesion G-protein coupled receptor (aGPCR) for steroid hormones, such as progesterone and 17alpha-hydroxyprogesterone (17OHP). Involved in many biological processes, such as myelination, sprouting angiogenesis, placenta, ear and cartilage development. Ligand binding causes a conformation change that triggers signaling via guanine nucleotide-binding proteins (G proteins) and modulates the activity of downstream effectors, such as adenylate cyclase. ADGRG6 is coupled to G(i) G alpha proteins and mediates inhibition of adenylate cyclase. Also able to couple to G(q) G proteins. Involved in myelination of the peripheral nervous system: required for differentiation of promyelinating Schwann cells and for normal myelination of axons. Also acts as a regulator of body length and bone mass. Acts as a regulator of blood-brain barrier formation in the central nervous system vie its association with LRP1 and ITGB1. The chain is Adhesion G-protein coupled receptor G6 from Mus musculus (Mouse).